The chain runs to 89 residues: Small ribosomal subunit protein uS15 (89 aa).

Belongs to the universal ribosomal protein uS15 family. In terms of assembly, part of the 30S ribosomal subunit. Forms a bridge to the 50S subunit in the 70S ribosome, contacting the 23S rRNA.

Its function is as follows. One of the primary rRNA binding proteins, it binds directly to 16S rRNA where it helps nucleate assembly of the platform of the 30S subunit by binding and bridging several RNA helices of the 16S rRNA. Forms an intersubunit bridge (bridge B4) with the 23S rRNA of the 50S subunit in the ribosome. This chain is Small ribosomal subunit protein uS15, found in Shewanella denitrificans (strain OS217 / ATCC BAA-1090 / DSM 15013).